The chain runs to 516 residues: 2-isopropylmalate synthase (516 aa).

Positions 5–267 constitute a Pyruvate carboxyltransferase domain; sequence VIIFDTTLRD…STNIVHKEIY (263 aa). Residues D14, H202, H204, and N238 each coordinate Mn(2+). A regulatory domain region spans residues 392-516; it reads YLKFFSVQSI…NKKLKNLKKY (125 aa).

This sequence belongs to the alpha-IPM synthase/homocitrate synthase family. LeuA type 1 subfamily. As to quaternary structure, homodimer. Mn(2+) serves as cofactor.

Its subcellular location is the cytoplasm. The enzyme catalyses 3-methyl-2-oxobutanoate + acetyl-CoA + H2O = (2S)-2-isopropylmalate + CoA + H(+). It participates in amino-acid biosynthesis; L-leucine biosynthesis; L-leucine from 3-methyl-2-oxobutanoate: step 1/4. Catalyzes the condensation of the acetyl group of acetyl-CoA with 3-methyl-2-oxobutanoate (2-ketoisovalerate) to form 3-carboxy-3-hydroxy-4-methylpentanoate (2-isopropylmalate). The sequence is that of 2-isopropylmalate synthase from Buchnera aphidicola subsp. Diuraphis noxia.